The chain runs to 258 residues: Small ribosomal subunit protein uS2 (258 aa).

The segment at 226–258 is disordered; sequence KQGQDDEETLEVDFKENADGSEEIVSAEENPED. Positions 244–258 are enriched in acidic residues; the sequence is DGSEEIVSAEENPED.

The protein belongs to the universal ribosomal protein uS2 family.

This is Small ribosomal subunit protein uS2 from Lactobacillus acidophilus (strain ATCC 700396 / NCK56 / N2 / NCFM).